Consider the following 574-residue polypeptide: Phospholipase B-like protein A (574 aa).

The N-terminal stretch at 1–20 is a signal peptide; the sequence is MRVIRSLLLLTIAIIGSVLS. N-linked (GlcNAc...) asparagine glycosylation is found at Asn159, Asn195, and Asn415.

Belongs to the phospholipase B-like family.

The protein localises to the secreted. Its function is as follows. Phospholipase that removes both fatty-acid chains from phosphatidylcholine and produces the water-soluble glycerophosphorylcholine. In addition to phosphatidylcholine deacylation, it also hydrolyzes phosphatidylinositol and phosphatidylethanolamine. This chain is Phospholipase B-like protein A (plbA), found in Dictyostelium discoideum (Social amoeba).